Reading from the N-terminus, the 545-residue chain is Chaperonin GroEL 1 (545 aa).

ATP is bound by residues 30–33 (TLGP), K51, 87–91 (DGTTT), G415, 479–481 (NAA), and D495.

The protein belongs to the chaperonin (HSP60) family. Forms a cylinder of 14 subunits composed of two heptameric rings stacked back-to-back. Interacts with the co-chaperonin GroES.

The protein resides in the cytoplasm. It catalyses the reaction ATP + H2O + a folded polypeptide = ADP + phosphate + an unfolded polypeptide.. In terms of biological role, together with its co-chaperonin GroES, plays an essential role in assisting protein folding. The GroEL-GroES system forms a nano-cage that allows encapsulation of the non-native substrate proteins and provides a physical environment optimized to promote and accelerate protein folding. The chain is Chaperonin GroEL 1 from Methylococcus capsulatus (strain ATCC 33009 / NCIMB 11132 / Bath).